The chain runs to 162 residues: MKGRAWKFGDDVDTDAVIPGRYLIFNTPGELAKYTFEGVRPDFAKNVHENDIVVAGSNFGCGSSREHAPLALKGSKVSCVIAKSFARIFFRNAINIGVPVLECPDTDKIDDGDELEVDISTGVIQNRTKGETYQATPLPDFVREIVDEGGLIEYARKLVSER.

It belongs to the LeuD family. LeuD type 2 subfamily. As to quaternary structure, heterodimer of LeuC and LeuD.

The catalysed reaction is (2R,3S)-3-isopropylmalate = (2S)-2-isopropylmalate. The protein operates within amino-acid biosynthesis; L-leucine biosynthesis; L-leucine from 3-methyl-2-oxobutanoate: step 2/4. Catalyzes the isomerization between 2-isopropylmalate and 3-isopropylmalate, via the formation of 2-isopropylmaleate. This is 3-isopropylmalate dehydratase small subunit (leuD) from Methanosarcina mazei (strain ATCC BAA-159 / DSM 3647 / Goe1 / Go1 / JCM 11833 / OCM 88) (Methanosarcina frisia).